The sequence spans 214 residues: Uracil phosphoribosyltransferase (214 aa).

5-phospho-alpha-D-ribose 1-diphosphate-binding positions include Arg107 and 135–143; that span reads DPMLATGKT. Residues Ile198 and 203–205 contribute to the uracil site; that span reads GDA. Asp204 provides a ligand contact to 5-phospho-alpha-D-ribose 1-diphosphate.

The protein belongs to the UPRTase family. Mg(2+) is required as a cofactor.

It carries out the reaction UMP + diphosphate = 5-phospho-alpha-D-ribose 1-diphosphate + uracil. It functions in the pathway pyrimidine metabolism; UMP biosynthesis via salvage pathway; UMP from uracil: step 1/1. With respect to regulation, allosterically activated by GTP. Its function is as follows. Catalyzes the conversion of uracil and 5-phospho-alpha-D-ribose 1-diphosphate (PRPP) to UMP and diphosphate. The polypeptide is Uracil phosphoribosyltransferase (Aeropyrum pernix (strain ATCC 700893 / DSM 11879 / JCM 9820 / NBRC 100138 / K1)).